A 1129-amino-acid polypeptide reads, in one-letter code: Phytochrome A (1129 aa).

The 183-residue stretch at 217 to 399 folds into the GAF domain; that stretch reads SMERLCDTMV…VFAIHVSKEL (183 aa). Residue C322 participates in phytochromobilin binding. PAS domains follow at residues 622-692 and 755-826; these read VTSE…LQGK and DYKA…VNLG. The region spanning 906-1123 is the Histidine kinase domain; that stretch reads YLRRQAKNPL…TFIITVELAA (218 aa).

It belongs to the phytochrome family. As to quaternary structure, homodimer. In terms of processing, contains one covalently linked phytochromobilin chromophore.

Functionally, regulatory photoreceptor which exists in two forms that are reversibly interconvertible by light: the Pr form that absorbs maximally in the red region of the spectrum and the Pfr form that absorbs maximally in the far-red region. Photoconversion of Pr to Pfr induces an array of morphogenic responses, whereas reconversion of Pfr to Pr cancels the induction of those responses. Pfr controls the expression of a number of nuclear genes including those encoding the small subunit of ribulose-bisphosphate carboxylase, chlorophyll A/B binding protein, protochlorophyllide reductase, rRNA, etc. It also controls the expression of its own gene(s) in a negative feedback fashion. The sequence is that of Phytochrome A (PHYA) from Petroselinum crispum (Parsley).